A 244-amino-acid polypeptide reads, in one-letter code: MDKSELVQKAKLSEQAERYDDMAASMKAVTELGAELSNEERNLLSVAYKNVVGARRSSWRVISSIEQKTEGNDKRQQMAREYREKVETELQDICKDVLDLLDRFLVPNATPPESKVFYLKMKGDYYRYLSEVASGDSKQETVASSQQAYQEAFEISKSEMQPTHPIRLGLALNFSVFYYEILNSPEKACSLAKSAFDEAIAELDTLNEESYKDSTLIMQLLRDNLTLWTSENQGEEADNVEGDN.

Methionine 1 bears the N-acetylmethionine mark.

The protein belongs to the 14-3-3 family. As to quaternary structure, homodimer, and heterodimer with other family members.

Its subcellular location is the cytoplasm. In terms of biological role, adapter protein implicated in the regulation of a large spectrum of both general and specialized signaling pathways. Binds to a large number of partners, usually by recognition of a phosphoserine or phosphothreonine motif. Binding generally results in the modulation of the activity of the binding partner. The protein is 14-3-3 protein beta/alpha-A (ywhab-a) of Xenopus laevis (African clawed frog).